We begin with the raw amino-acid sequence, 632 residues long: Probable potassium transport system protein Kup 3 (632 aa).

12 helical membrane passes run leucine 17–leucine 37, leucine 60–leucine 80, threonine 106–isoleucine 126, proline 144–valine 164, phenylalanine 175–isoleucine 195, alanine 210–leucine 230, tryptophan 254–leucine 274, alanine 292–isoleucine 312, isoleucine 344–phenylalanine 364, leucine 370–phenylalanine 390, leucine 401–alanine 421, and isoleucine 426–threonine 446.

This sequence belongs to the HAK/KUP transporter (TC 2.A.72) family.

Its subcellular location is the cell inner membrane. The catalysed reaction is K(+)(in) + H(+)(in) = K(+)(out) + H(+)(out). Transport of potassium into the cell. Likely operates as a K(+):H(+) symporter. This chain is Probable potassium transport system protein Kup 3, found in Rhizobium etli (strain ATCC 51251 / DSM 11541 / JCM 21823 / NBRC 15573 / CFN 42).